Consider the following 444-residue polypeptide: Glutamyl-tRNA reductase (444 aa).

Substrate is bound by residues 49 to 52 (TCNR), serine 109, 114 to 116 (ETQ), and glutamine 120. The Nucleophile role is filled by cysteine 50. 189–194 (GAGKMG) contacts NADP(+).

This sequence belongs to the glutamyl-tRNA reductase family. Homodimer.

It carries out the reaction (S)-4-amino-5-oxopentanoate + tRNA(Glu) + NADP(+) = L-glutamyl-tRNA(Glu) + NADPH + H(+). Its pathway is porphyrin-containing compound metabolism; protoporphyrin-IX biosynthesis; 5-aminolevulinate from L-glutamyl-tRNA(Glu): step 1/2. In terms of biological role, catalyzes the NADPH-dependent reduction of glutamyl-tRNA(Glu) to glutamate 1-semialdehyde (GSA). The polypeptide is Glutamyl-tRNA reductase (Bacillus cereus (strain ZK / E33L)).